The sequence spans 321 residues: Dolichyl N-acetyl-alpha-D-glucosaminyl phosphate 3-beta-D-2,3-diacetamido-2,3-dideoxy-beta-D-glucuronosyltransferase (321 aa).

Transmembrane regions (helical) follow at residues 252–272 (FGFL…FIYI) and 290–310 (LYIA…YGFF).

It belongs to the glycosyltransferase 2 family.

Its subcellular location is the cell membrane. It catalyses the reaction an archaeal dolichyl N-acetyl-alpha-D-glucosaminyl phosphate + UDP-2,3-diacetamido-2,3-dideoxy-alpha-D-glucuronate = an archaeal dolichyl 3-O-(2,3-diacetamido-2,3-dideoxy- beta-D-glucuronosyl)-N-acetyl- alpha-D-glucosaminyl phosphate + UDP + H(+). The protein operates within cell surface structure biogenesis; S-layer biogenesis. Its pathway is protein modification; protein glycosylation. In terms of biological role, involved in the assembly of an N-linked disaccharide that decorates the S-layer glycoprotein and flagellins. AglC catalyzes the transfer of 2,3-diacetamido-2,3-dideoxy-alpha-D-glucuronic acid (Glc-2,3-diNAcA) from uridine 5'-diphospho 2,3-diacetamido-2,3-dideoxy-alpha-D-glucuronic acid (UDP-Glc-2,3-diNAcA) to the AglK product Dol-P-GlcNAc to yield Dol-P-GlcNAc-Glc-2,3-diNAcA. AglC is specific for the monophosphate-linked Dol-P-GlcNAc. This Methanococcus voltae protein is Dolichyl N-acetyl-alpha-D-glucosaminyl phosphate 3-beta-D-2,3-diacetamido-2,3-dideoxy-beta-D-glucuronosyltransferase.